The sequence spans 161 residues: uncharacterized protein (161 aa).

The first 27 residues, 1–27 (MKKIGLLFMLCLAALFTIGFPAQQADA), serve as a signal peptide directing secretion.

Its subcellular location is the secreted. This is an uncharacterized protein from Bacillus subtilis (strain 168).